A 1100-amino-acid polypeptide reads, in one-letter code: ATP-dependent DNA helicase mph1 (1100 aa).

Acidic residues predominate over residues 1-21 (MSDSDDYLQDDPDDQAFDDFA). Positions 1-250 (MSDSDDYLQD…RPSSFMQSSN (250 aa)) are disordered. A compositionally biased stretch (low complexity) spans 38 to 61 (RNQTRNTTSRRNEDNSVASDSDSF). Residues 84-94 (FADHPENEASS) are compositionally biased toward basic and acidic residues. Positions 104 to 117 (NNPQENIFVTQLTQ) are enriched in polar residues. Over residues 135–146 (PPPPPPPAPTKP) the composition is skewed to pro residues. 2 stretches are compositionally biased toward polar residues: residues 182–191 (RLSFSTAQNS) and 200–209 (NAPTNTAQTE). Acidic residues predominate over residues 212-223 (DFLDDIPDDAFD). Low complexity predominate over residues 237–249 (SNSSRPSSFMQSS). In terms of domain architecture, Helicase ATP-binding spans 317–485 (ITQKGLFHNL…AVIDGLEISK (169 aa)). 330–337 (LPTGLGKT) is an ATP binding site. A DEAH box motif is present at residues 433–436 (DEAH). Residues 655–829 (YLKQVVLNHF…GTRFTFHDDK (175 aa)) form the Helicase C-terminal domain. Disordered regions lie at residues 850–913 (PEEN…PEPV) and 1003–1100 (RRPA…LGRR). Composition is skewed to basic residues over residues 863-875 (RRGR…PKKF) and 1019-1028 (GNKKRLRKGR). The span at 1053-1066 (QPISPEQLLSSFTD) shows a compositional bias: polar residues. The span at 1082–1092 (LELDADFEAPD) shows a compositional bias: acidic residues.

It belongs to the DEAD box helicase family. DEAH subfamily. FANCM sub-subfamily. In terms of assembly, interacts with the MHF histone-fold complex to form the FANCM-MHF complex.

It localises to the nucleus. The catalysed reaction is ATP + H2O = ADP + phosphate + H(+). ATP-dependent DNA helicase involved in DNA damage repair by homologous recombination and in genome maintenance. Capable of unwinding D-loops. Plays a role in limiting crossover recombinants during mitotic DNA double-strand break (DSB) repair. Component of a FANCM-MHF complex which promotes gene conversion at blocked replication forks, probably by reversal of the stalled fork. In Aspergillus terreus (strain NIH 2624 / FGSC A1156), this protein is ATP-dependent DNA helicase mph1.